The following is a 238-amino-acid chain: Cell division protein A (238 aa).

Interacts with CdvB.

The protein resides in the cytoplasm. It is found in the nucleoid. The protein localises to the cell membrane. Functionally, part of a cell division machinery. The CdvA, CdvB and CdvC proteins polymerize between segregating nucleoids and persist throughout cell division, forming a successively smaller structure during constriction. CdvA is a membrane interacting protein that recruits ESCRT-III homologs to the membrane. The chain is Cell division protein A from Sulfolobus acidocaldarius (strain ATCC 33909 / DSM 639 / JCM 8929 / NBRC 15157 / NCIMB 11770).